The sequence spans 900 residues: Suppressor of activated egl-4 protein 1 (900 aa).

3 disordered regions span residues 1–75 (MPPP…HLPT), 340–380 (PVAE…SRKN), and 406–425 (WASTSSADEKMQTERKESLE). Over residues 53 to 75 (ASGQQHRPSIMSGQSHQNNHLPT) the composition is skewed to polar residues. Basic and acidic residues-rich tracts occupy residues 358 to 377 (GDMKHLMNGKKRSEDGDGPS) and 412 to 425 (ADEKMQTERKESLE). One can recognise an ELM2 domain in the interval 451–544 (PHINLGKNYQ…AAVEDLLRSD (94 aa)). An SANT domain is found at 560 to 611 (NDSVLWTPDEIYQFQDAIYQSEKDFDKVAVELPGKSVKECVQFYYTWKKDCP). The segment at 710–729 (PTAPRAHHTPSASASKKGAQ) is disordered. Residues 736–758 (FHCRLCDKCFEKVKSLNAHMKSH) form a C2H2-type zinc finger.

As to quaternary structure, may be a component of a histone deacetylase complex containing saeg-2, saeg-1 and hda-2. May interact with egl-4. In terms of tissue distribution, ubiquitously expressed.

The protein resides in the nucleus. In terms of biological role, as a likely component of a histone deacetylase complex, together with saeg-2 and hda-2, functions downstream of the cAMP-dependent kinase egl-4 to regulate the expression of genes required for egg-laying and foraging. The sequence is that of Suppressor of activated egl-4 protein 1 from Caenorhabditis elegans.